The following is a 199-amino-acid chain: Recombination protein RecR (199 aa).

The C4-type zinc finger occupies 58–73 (CKKCFNLTSEEECEIC). Residues 81–175 (KIICVVAETK…KVTRIAYGLP (95 aa)) form the Toprim domain.

It belongs to the RecR family.

In terms of biological role, may play a role in DNA repair. It seems to be involved in an RecBC-independent recombinational process of DNA repair. It may act with RecF and RecO. This Prochlorococcus marinus subsp. pastoris (strain CCMP1986 / NIES-2087 / MED4) protein is Recombination protein RecR.